A 221-amino-acid chain; its full sequence is PKHD-type hydroxylase P9215_13741 (221 aa).

Residues 80 to 174 enclose the Fe2OG dioxygenase domain; sequence RIHGTMFTKT…RFVVVGWIES (95 aa). 3 residues coordinate Fe cation: His-98, Asp-100, and His-155. Arg-165 lines the 2-oxoglutarate pocket.

The cofactor is Fe(2+). It depends on L-ascorbate as a cofactor.

The polypeptide is PKHD-type hydroxylase P9215_13741 (Prochlorococcus marinus (strain MIT 9215)).